The following is a 290-amino-acid chain: UPF0750 membrane protein YpjC (290 aa).

Transmembrane regions (helical) follow at residues N9–M29, A47–I67, T75–Q95, D106–F126, F146–L166, and L179–A199.

Belongs to the UPF0750 family.

The protein resides in the cell membrane. In Bacillus subtilis (strain 168), this protein is UPF0750 membrane protein YpjC (ypjC).